Consider the following 116-residue polypeptide: Phosphoribosyl-AMP cyclohydrolase (116 aa).

Asp85 lines the Mg(2+) pocket. Zn(2+) is bound at residue Cys86. Mg(2+) is bound by residues Asp87 and Asp89. Positions 102 and 109 each coordinate Zn(2+).

The protein belongs to the PRA-CH family. Homodimer. The cofactor is Mg(2+). It depends on Zn(2+) as a cofactor.

The protein resides in the cytoplasm. The enzyme catalyses 1-(5-phospho-beta-D-ribosyl)-5'-AMP + H2O = 1-(5-phospho-beta-D-ribosyl)-5-[(5-phospho-beta-D-ribosylamino)methylideneamino]imidazole-4-carboxamide. It participates in amino-acid biosynthesis; L-histidine biosynthesis; L-histidine from 5-phospho-alpha-D-ribose 1-diphosphate: step 3/9. Its function is as follows. Catalyzes the hydrolysis of the adenine ring of phosphoribosyl-AMP. In Thermobifida fusca (strain YX), this protein is Phosphoribosyl-AMP cyclohydrolase.